Reading from the N-terminus, the 127-residue chain is Large ribosomal subunit protein bL17 (127 aa).

It belongs to the bacterial ribosomal protein bL17 family. As to quaternary structure, part of the 50S ribosomal subunit. Contacts protein L32.

This is Large ribosomal subunit protein bL17 from Legionella pneumophila (strain Corby).